Consider the following 62-residue polypeptide: uncharacterized protein (62 aa).

Positions Val-38–Met-62 are disordered.

This is an uncharacterized protein from Schizosaccharomyces pombe (strain 972 / ATCC 24843) (Fission yeast).